The following is a 160-amino-acid chain: S-ribosylhomocysteine lyase (160 aa).

Residues His-57, His-61, and Cys-127 each coordinate Fe cation.

It belongs to the LuxS family. As to quaternary structure, homodimer. Fe cation is required as a cofactor.

It catalyses the reaction S-(5-deoxy-D-ribos-5-yl)-L-homocysteine = (S)-4,5-dihydroxypentane-2,3-dione + L-homocysteine. Functionally, involved in the synthesis of autoinducer 2 (AI-2) which is secreted by bacteria and is used to communicate both the cell density and the metabolic potential of the environment. The regulation of gene expression in response to changes in cell density is called quorum sensing. Catalyzes the transformation of S-ribosylhomocysteine (RHC) to homocysteine (HC) and 4,5-dihydroxy-2,3-pentadione (DPD). In Streptococcus pyogenes serotype M4 (strain MGAS10750), this protein is S-ribosylhomocysteine lyase.